Reading from the N-terminus, the 120-residue chain is Flagellar protein FliT (120 aa).

Residues 1 to 50 (MERHQHLLSEYQQILTLSEQMLMLATVENWNALVDLEMTYLKAVENTANI) form a required for homodimerization region. Residues 60 to 98 (LQELLRQKLRSILENEIEIKRLLQRRLDKLSELVGQSTR) are fliD binding.

Belongs to the FliT family. In terms of assembly, homodimer. Interacts with FliD and FlhC.

The protein resides in the cytoplasm. It is found in the cytosol. Functionally, dual-function protein that regulates the transcription of class 2 flagellar operons and that also acts as an export chaperone for the filament-capping protein FliD. As a transcriptional regulator, acts as an anti-FlhDC factor; it directly binds FlhC, thus inhibiting the binding of the FlhC/FlhD complex to class 2 promoters, resulting in decreased expression of class 2 flagellar operons. As a chaperone, effects FliD transition to the membrane by preventing its premature polymerization, and by directing it to the export apparatus. The protein is Flagellar protein FliT of Yersinia pestis bv. Antiqua (strain Antiqua).